Consider the following 282-residue polypeptide: Fused uL13/uS9 ribosomal subunit protein (282 aa).

The large ribosomal subunit protein uL13 stretch occupies residues 1–141 (MLLMIINGEG…LGEISELLGA (141 aa)). The segment at 150–282 (MKKVIHTSGK…ARARRQKSYR (133 aa)) is small ribosomal subunit protein uS9. The interval 259 to 282 (DPRRSEPKKYGGRGARARRQKSYR) is disordered. Over residues 273-282 (ARARRQKSYR) the composition is skewed to basic residues.

In the N-terminal section; belongs to the universal ribosomal protein uL13 family. This sequence in the C-terminal section; belongs to the universal ribosomal protein uS9 family. L13 is part of the 50S ribosomal subunit. S9 is part of the 30S ribosomal subunit.

Functionally, L13 protein is one of the early assembly proteins of the 50S ribosomal subunit, although it is not seen to bind rRNA by itself. It is important during the early stages of 50S assembly. This is Fused uL13/uS9 ribosomal subunit protein (rpl13/rps9) from Methanothermobacter thermautotrophicus (strain ATCC 29096 / DSM 1053 / JCM 10044 / NBRC 100330 / Delta H) (Methanobacterium thermoautotrophicum).